We begin with the raw amino-acid sequence, 258 residues long: GCN5-related N-acetyltransferase 2, chloroplastic (258 aa).

Residues 1-58 (MLLIPISSSSSSSISPPPNSYPSNHHSLFFSNLTFPIQHGSRKLKTLRLRANFWESIR) constitute a chloroplast transit peptide. The interval 107 to 194 (IIFSSGGEID…DHAFNATIWD (88 aa)) is interaction with begomoviruses NSP protein. One can recognise an N-acetyltransferase domain in the interval 107–258 (IIFSSGGEID…GIKGMFWYPK (152 aa)). Residues 195-197 (VLV), 203-208 (GQGLGK), 231-233 (DSQ), and tyrosine 238 each bind acetyl-CoA. Tyrosine 238 acts as the Proton donor in catalysis.

It belongs to the acetyltransferase family. GNAT subfamily. In terms of assembly, oligomer. Interacts with begomoviruses NSP but not with CP. This interaction may allow NSP to recruit NSI monomers to acetylate viral genome-bound CP and thus regulate nuclear export of viral genome by NSP. Post-translationally, S-sulfhydrated and activated by hydrogen sulfide H(2)S to promote melatonin accumulation and subsequent melatonin-dependent stomotal closure to combat osmotic stress. In terms of processing, autoacetylated. As to expression, highly expressed in cauline leaves and seeds, at lower levels in stems, siliques, inflorescences and rosettes leaves and at very low levels in roots. Expressed in the xylem parenchyma and phloem of the leaves and root, and in guard cells of young leaves.

The protein localises to the plastid. Its subcellular location is the chloroplast. The enzyme catalyses 5-methoxytryptamine + acetyl-CoA = melatonin + CoA + H(+). It carries out the reaction L-lysyl-[histone] + acetyl-CoA = N(6)-acetyl-L-lysyl-[histone] + CoA + H(+). The catalysed reaction is L-lysyl-[protein] + acetyl-CoA = N(6)-acetyl-L-lysyl-[protein] + CoA + H(+). It catalyses the reaction serotonin + acetyl-CoA = N-acetylserotonin + CoA + H(+). The enzyme catalyses N-terminal L-alanyl-[protein] + acetyl-CoA = N-terminal N(alpha)-acetyl-L-alanyl-[protein] + CoA + H(+). It carries out the reaction N-terminal L-seryl-[protein] + acetyl-CoA = N-terminal N(alpha)-acetyl-L-seryl-[protein] + CoA + H(+). The catalysed reaction is N-terminal L-valyl-[protein] + acetyl-CoA = N-terminal N(alpha)-acetyl-L-valyl-[protein] + CoA + H(+). It catalyses the reaction N-terminal glycyl-[protein] + acetyl-CoA = N-terminal N(alpha)-acetylglycyl-[protein] + CoA + H(+). The enzyme catalyses an N-terminal L-alpha-aminoacyl-[protein] + acetyl-CoA = N-terminal N(alpha)-acetyl-L-alpha-aminoacyl-[protein] + CoA + H(+). It carries out the reaction N-terminal L-threonyl-[protein] + acetyl-CoA = N-terminal N(alpha)-acetyl-L-threonyl-[protein] + CoA + H(+). The catalysed reaction is N-terminal L-methionyl-[protein] + acetyl-CoA = N-terminal N(alpha)-acetyl-L-methionyl-[protein] + CoA + H(+). It catalyses the reaction N-terminal L-leucyl-[protein] + acetyl-CoA = N-terminal N(alpha)-acetyl-L-leucyl-[protein] + CoA + H(+). With respect to regulation, inhibited by the viral nuclear shuttle protein (NSP) that binds to the region required for oligomerization. Protein acetyltransferase with dual specificity triggering both N-alpha-acetylation (NTA), with a preference for alanine, serine, threonine, methionine and to a lower extent valine as substrates (can also use glycine and leucine), and epsilon-lysine acetylation (KA) of several plastid proteins. Triggers lysine acetylation in KEA1 and KEA2. Acetylates in vitro histones H2A and H3. Does not act as a transcriptional activator but required for the dynamic reorganization of thylakoid protein complexes and grana during photosynthetic state transitions. Involved in melatonin biosynthesis by catalyzing the formation of N-acetylserotonin (NAS) from serotonin and of melatonin (N-acetyl-5-methoxytryptamine) from 5-methoxytryptamine (5-MT). By triggering melatonin biosynthesis, contributes to the chloroplast protein quality control (CPQC), which plays a pivotal role in starch synthesis, and confers melatonin-associated tolerance to high light (HL) stress. Prevents the accumulation of oil and anthocyanin content in mature seeds and avoids seed germination in a melatonin-dependent manner, but promotes mucilage production in the seed coat. Contributes to melatonin-mediated anthocyanin production in cold-exposed seedlings. Implicated in melatonin-monitored circadian dynamics of stomatal aperture to minimize night water loss and promote drought tolerance, partly by triggering hydrogen sulfide H(2)S-dependent stomotal closure in response to osmotic stress. Its function is as follows. (Microbial infection) Required for begomovirus infection and systemic spread. In case of begomoviruses infection, acetylates the capsid protein (CP), but not the nuclear shuttle protein (NSP). Stimulates melatonin-triggered defense responses to the necrotrophic Botrytis cinerea. This is GCN5-related N-acetyltransferase 2, chloroplastic from Arabidopsis thaliana (Mouse-ear cress).